Consider the following 608-residue polypeptide: ATP-citrate synthase beta chain protein 1 (608 aa).

Residues 214–234 (ILRF…ELGG) and 265–291 (FKSE…KNQA) contribute to the ATP site. Glutamate 231 contributes to the Mg(2+) binding site. Residue histidine 273 is the Tele-phosphohistidine intermediate of the active site. 292–302 (LKDAGAVVPTS) lines the CoA pocket.

It belongs to the succinate/malate CoA ligase alpha subunit family. In terms of assembly, heterooctamer of 4 alpha and 4 beta chains.

It localises to the cytoplasm. It is found in the cytosol. It catalyses the reaction oxaloacetate + acetyl-CoA + ADP + phosphate = citrate + ATP + CoA. ATP citrate-lyase is the primary enzyme responsible for the synthesis of cytosolic acetyl-CoA, used for the elongation of fatty acids and biosynthesis of isoprenoids, flavonoids and malonated derivatives. May supply substrate to the cytosolic acetyl-CoA carboxylase, which generates the malonyl-CoA used for the synthesis of a multitude of compounds, including very long chain fatty acids and flavonoids. In contrast to all known animal ACL enzymes having a homomeric structure, plant ACLs are composed of alpha and beta chains. The polypeptide is ATP-citrate synthase beta chain protein 1 (ACLB-1) (Oryza sativa subsp. japonica (Rice)).